We begin with the raw amino-acid sequence, 328 residues long: Neuronal membrane glycoprotein M6-b (328 aa).

Residues 1 to 22 (MKPAMETAAEENTEQSQERKVN) form a disordered region. Residues 71–91 (GGVPYASLVATILCFSGVALF) traverse the membrane as a helical segment. An N-linked (GlcNAc...) asparagine glycan is attached at Asn-113. Helical transmembrane passes span 130 to 150 (VIYG…AEGF) and 176 to 196 (FVFL…FSAV). The N-linked (GlcNAc...) asparagine glycan is linked to Asn-217. The helical transmembrane segment at 265–285 (FIVACAGAGATVIALIHFLMI) threads the bilayer. A phosphoserine mark is found at Ser-318, Ser-320, and Ser-326.

The protein belongs to the myelin proteolipid protein family. In terms of assembly, interacts with SERT. As to expression, widely expressed. In the brain, expressed in neurons and oligodendrocytes.

It is found in the membrane. The protein localises to the cell membrane. May be involved in neural development. Involved in regulation of osteoblast function and bone formation. Involved in matrix vesicle release by osteoblasts; this function seems to involve maintenance of the actin cytoskeleton. May be involved in cellular trafficking of SERT and thereby in regulation of serotonin uptake. The chain is Neuronal membrane glycoprotein M6-b (Gpm6b) from Mus musculus (Mouse).